We begin with the raw amino-acid sequence, 787 residues long: Bifunctional dethiobiotin synthetase/adenosylmethionine-8-amino-7-oxononanoate aminotransferase (787 aa).

Residue 23-28 (DVGKTI) participates in ATP binding. Threonine 27 contacts Mg(2+). Residue threonine 54 coordinates substrate. Aspartate 61 and glutamate 123 together coordinate Mg(2+). ATP-binding positions include 123-126 (ETAG) and 184-185 (KD). 323 to 324 (WW) provides a ligand contact to (8S)-8-amino-7-oxononanoate. Pyridoxal 5'-phosphate is bound at residue 384 to 385 (GS). Tyrosine 421 contributes to the (8S)-8-amino-7-oxononanoate binding site. Aspartate 582 serves as a coordination point for pyridoxal 5'-phosphate. The (8S)-8-amino-7-oxononanoate site is built by lysine 611 and glycine 645. Position 646 to 647 (646 to 647 (HS)) interacts with pyridoxal 5'-phosphate. Arginine 756 contributes to the (8S)-8-amino-7-oxononanoate binding site.

In the N-terminal section; belongs to the dethiobiotin synthetase family. This sequence in the C-terminal section; belongs to the class-III pyridoxal-phosphate-dependent aminotransferase family. BioA subfamily. As to quaternary structure, homodimer. The cofactor is Mg(2+). Pyridoxal 5'-phosphate serves as cofactor.

It is found in the mitochondrion matrix. The enzyme catalyses (7R,8S)-7,8-diammoniononanoate + CO2 + ATP = (4R,5S)-dethiobiotin + ADP + phosphate + 3 H(+). The catalysed reaction is (8S)-8-amino-7-oxononanoate + S-adenosyl-L-methionine = S-adenosyl-4-methylsulfanyl-2-oxobutanoate + (7R,8S)-7,8-diammoniononanoate. It participates in cofactor biosynthesis; biotin biosynthesis; biotin from 7,8-diaminononanoate: step 1/2. The protein operates within cofactor biosynthesis; biotin biosynthesis; 7,8-diaminononanoate from 8-amino-7-oxononanoate (SAM route): step 1/1. Functionally, bifunctional enzyme; part of the cluster involved in the biosynthesis of biotin (also known as vitamin B8 or vitamin H), a water-soluble vitamin that functions as a prosthetic group of many carboxylases, such as acetyl-CoA carboxylase and pyruvate carboxylase. Catalyzes a mechanistically unusual reaction, the ATP-dependent insertion of CO2 between the N7 and N8 nitrogen atoms of 7,8-diaminopelargonic acid (DAPA) to form an ureido ring. Also catalyzes the transfer of the alpha-amino group from S-adenosyl-L-methionine (SAM) to 7-keto-8-aminopelargonic acid (KAPA) to form 7,8-diaminopelargonic acid (DAPA). It is the only animotransferase known to utilize SAM as an amino donor. The sequence is that of Bifunctional dethiobiotin synthetase/adenosylmethionine-8-amino-7-oxononanoate aminotransferase from Emericella nidulans (strain FGSC A4 / ATCC 38163 / CBS 112.46 / NRRL 194 / M139) (Aspergillus nidulans).